The sequence spans 349 residues: Holliday junction branch migration complex subunit RuvB (349 aa).

Residues 1-185 (MSQEKERLIS…FGSIFRLDFY (185 aa)) form a large ATPase domain (RuvB-L) region. Residues Leu-24, Arg-25, Gly-66, Lys-69, Thr-70, Thr-71, 132–134 (EDY), Arg-175, Tyr-185, and Arg-222 contribute to the ATP site. Thr-70 is a binding site for Mg(2+). The tract at residues 186–256 (DEEAIHDIVR…IAAESLACLE (71 aa)) is small ATPAse domain (RuvB-S). The tract at residues 259-349 (KLGLDEIDHK…QQGLWTENGS (91 aa)) is head domain (RuvB-H). Residues Arg-314 and Arg-319 each contribute to the DNA site.

Belongs to the RuvB family. As to quaternary structure, homohexamer. Forms an RuvA(8)-RuvB(12)-Holliday junction (HJ) complex. HJ DNA is sandwiched between 2 RuvA tetramers; dsDNA enters through RuvA and exits via RuvB. An RuvB hexamer assembles on each DNA strand where it exits the tetramer. Each RuvB hexamer is contacted by two RuvA subunits (via domain III) on 2 adjacent RuvB subunits; this complex drives branch migration. In the full resolvosome a probable DNA-RuvA(4)-RuvB(12)-RuvC(2) complex forms which resolves the HJ.

The protein resides in the cytoplasm. The enzyme catalyses ATP + H2O = ADP + phosphate + H(+). In terms of biological role, the RuvA-RuvB-RuvC complex processes Holliday junction (HJ) DNA during genetic recombination and DNA repair, while the RuvA-RuvB complex plays an important role in the rescue of blocked DNA replication forks via replication fork reversal (RFR). RuvA specifically binds to HJ cruciform DNA, conferring on it an open structure. The RuvB hexamer acts as an ATP-dependent pump, pulling dsDNA into and through the RuvAB complex. RuvB forms 2 homohexamers on either side of HJ DNA bound by 1 or 2 RuvA tetramers; 4 subunits per hexamer contact DNA at a time. Coordinated motions by a converter formed by DNA-disengaged RuvB subunits stimulates ATP hydrolysis and nucleotide exchange. Immobilization of the converter enables RuvB to convert the ATP-contained energy into a lever motion, pulling 2 nucleotides of DNA out of the RuvA tetramer per ATP hydrolyzed, thus driving DNA branch migration. The RuvB motors rotate together with the DNA substrate, which together with the progressing nucleotide cycle form the mechanistic basis for DNA recombination by continuous HJ branch migration. Branch migration allows RuvC to scan DNA until it finds its consensus sequence, where it cleaves and resolves cruciform DNA. The protein is Holliday junction branch migration complex subunit RuvB of Dehalococcoides mccartyi (strain CBDB1).